We begin with the raw amino-acid sequence, 299 residues long: MKLKDLIGKASIHKNKTIAVAHAEDEEVIRAVKLAAEHLSARFLLTGDSKKLNELTSSMQGHQVEIVHANTPEESAKLAVRAVHHKTADVLMKGNVPTSVLLKAVLNRQEGLRSASVLSHVAVFDIPDFDRLMFVTDSAMNIAPSLEELRQILQNAVHVAHAVGNNMPKAAALAAVETVNPKMEATVNAAALAQMYKRGQIKGCIVDGPLALDNAVSQIAAAQKKISGDVAGNADILLVPTIEAGNILYKSLIYFAKASVAAVITGAKAPIALTSRADSAENKLYSIALAICASEEYTH.

The protein belongs to the phosphate acetyltransferase and butyryltransferase family.

It carries out the reaction butanoyl-CoA + phosphate = butanoyl phosphate + CoA. Catalyzes the conversion of butyryl-CoA through butyryl phosphate to butyrate. The protein is Probable phosphate butyryltransferase (yqiS) of Bacillus subtilis (strain 168).